A 195-amino-acid polypeptide reads, in one-letter code: Transcription repressor OFP17 (195 aa).

The region spanning 130–190 is the OVATE domain; it reads EDNAVEDACR…SRFYGELCRD (61 aa).

The protein resides in the nucleus. Functionally, transcriptional repressor that may regulate multiple aspects of plant growth and development through the regulation of BEL1-LIKE (BLH) and KNOX TALE (KNAT) homeodomain transcription factors. This chain is Transcription repressor OFP17 (OFP17), found in Arabidopsis thaliana (Mouse-ear cress).